We begin with the raw amino-acid sequence, 308 residues long: Acyltransferase drtE (308 aa).

Residues 35–159 (PALVMNPGYN…AAEAKDNFSR (125 aa)) form the AB hydrolase-1 domain.

This sequence belongs to the polyketide transferase af380 family.

It functions in the pathway secondary metabolite biosynthesis; terpenoid biosynthesis. In terms of biological role, acyltransferase; part of the gene cluster that mediates the biosynthesis of various drimane-type sesquiterpene esters, compounds that exhibit diverse biological activities and are widely present in eukaryotes. The pathway begins with the synthesis of the backbone drimenol by the terpene cyclase drtB using farnesyl pyrophosphate (FPP) as substrate. The cytochrome P450 monooxygenase drtD is then responsible for the hydroxylations at C-6, C-9 and C-12, as well as the oxidation of hydroxyl groups at C-6 and C-11 to a ketone and an aldehyde, respectively. Then, the biosynthesis can go in two directions, either the hydroxylated drimenol is further hydroxylated at C-2 and C-3 by an enzyme(s) not associated with the drt cluster, or the FAD-binding oxidoreductase drtC further oxidizes C-11 or C-12 to form the butyrolactone ring. DrtB, drtD and drtC are solely responsible for the formation of the different drimane structures observed during drimane sesquiterpenes biosynthesis. The polyketide synthase drtA synthesizes different lengths (C6 and C8) of PKS chains, which are then oxidized to varying degrees by the short-chain dehydrogenase drtF. Finally, these PKS chains are transferred onto drimane sesquiterpenes by the acyltransferase drtE, forming the sesquiterpene esters. In addition to the different fatty acyl-CoA chains produced by drtA, drtE is also able to use cinnamoyl-CoA as a substrate. This Aspergillus calidoustus protein is Acyltransferase drtE.